Here is a 359-residue protein sequence, read N- to C-terminus: 4-dedimethylamino-4-oxo-anhydrotetracycline transaminase OxyQ (359 aa).

Positions 32, 92, and 155 each coordinate substrate. Residues 91 to 92, Asn155, Tyr186, and 216 to 218 each bind pyridoxal 5'-phosphate; these read TK and SLS. N6-(pyridoxal phosphate)lysine is present on Lys219. Position 227 (Arg227) interacts with pyridoxal 5'-phosphate. Arg341 is a binding site for substrate.

The protein belongs to the class-I pyridoxal-phosphate-dependent aminotransferase family. It depends on pyridoxal 5'-phosphate as a cofactor.

Its pathway is antibiotic biosynthesis; oxytetracycline biosynthesis. Involved in the biosynthesis of the tetracycline antibiotic, oxytetracycline. Catalyzes the conversion of 4-dedimethylamino-4-oxoanhydrotetracycline to yield 4-amino-4-de(dimethylamino)anhydrotetracycline (4-amino-ATC). This is 4-dedimethylamino-4-oxo-anhydrotetracycline transaminase OxyQ from Streptomyces rimosus.